The sequence spans 334 residues: Flotillin-like protein FloA (334 aa).

A helical transmembrane segment spans residues 3–23; it reads LYLIFLIVVGVVGLVLVGLFL.

Belongs to the flotillin-like FloA family. As to quaternary structure, homooligomerizes.

Its subcellular location is the cell membrane. It localises to the membrane raft. In terms of biological role, found in functional membrane microdomains (FMM) that may be equivalent to eukaryotic membrane rafts. FMMs are highly dynamic and increase in number as cells age. Flotillins are thought to be important factors in membrane fluidity. This is Flotillin-like protein FloA from Opitutus terrae (strain DSM 11246 / JCM 15787 / PB90-1).